Here is a 71-residue protein sequence, read N- to C-terminus: SRY-related protein LG27 (71 aa).

Residues 1–68 (VKRPMNAFMV…KHMADYPNYK (68 aa)) constitute a DNA-binding region (HMG box).

Its subcellular location is the nucleus. The polypeptide is SRY-related protein LG27 (Eublepharis macularius (Leopard gecko)).